The sequence spans 152 residues: SsrA-binding protein (152 aa).

Positions 129–140 are enriched in basic and acidic residues; the sequence is KREDMKKKDSQR. The segment at 129-152 is disordered; that stretch reads KREDMKKKDSQRELSQALKSKNRE. The span at 141–152 shows a compositional bias: polar residues; sequence ELSQALKSKNRE.

The protein belongs to the SmpB family.

It localises to the cytoplasm. In terms of biological role, required for rescue of stalled ribosomes mediated by trans-translation. Binds to transfer-messenger RNA (tmRNA), required for stable association of tmRNA with ribosomes. tmRNA and SmpB together mimic tRNA shape, replacing the anticodon stem-loop with SmpB. tmRNA is encoded by the ssrA gene; the 2 termini fold to resemble tRNA(Ala) and it encodes a 'tag peptide', a short internal open reading frame. During trans-translation Ala-aminoacylated tmRNA acts like a tRNA, entering the A-site of stalled ribosomes, displacing the stalled mRNA. The ribosome then switches to translate the ORF on the tmRNA; the nascent peptide is terminated with the 'tag peptide' encoded by the tmRNA and targeted for degradation. The ribosome is freed to recommence translation, which seems to be the essential function of trans-translation. In Pelobacter propionicus (strain DSM 2379 / NBRC 103807 / OttBd1), this protein is SsrA-binding protein.